Reading from the N-terminus, the 351-residue chain is Glycerol-3-phosphate dehydrogenase [NAD(P)+] (351 aa).

The NADPH site is built by Ser-12, Trp-13, His-33, and Lys-114. Positions 114, 145, and 147 each coordinate sn-glycerol 3-phosphate. Residue Ala-149 participates in NADPH binding. Sn-glycerol 3-phosphate is bound by residues Lys-200, Asp-253, Ser-263, Arg-264, and Asn-265. Lys-200 functions as the Proton acceptor in the catalytic mechanism. Arg-264 provides a ligand contact to NADPH. NADPH is bound by residues Val-288 and Glu-290.

It belongs to the NAD-dependent glycerol-3-phosphate dehydrogenase family.

It localises to the cytoplasm. It carries out the reaction sn-glycerol 3-phosphate + NAD(+) = dihydroxyacetone phosphate + NADH + H(+). The enzyme catalyses sn-glycerol 3-phosphate + NADP(+) = dihydroxyacetone phosphate + NADPH + H(+). It functions in the pathway membrane lipid metabolism; glycerophospholipid metabolism. Its function is as follows. Catalyzes the reduction of the glycolytic intermediate dihydroxyacetone phosphate (DHAP) to sn-glycerol 3-phosphate (G3P), the key precursor for phospholipid synthesis. The protein is Glycerol-3-phosphate dehydrogenase [NAD(P)+] of Lacticaseibacillus casei (strain BL23) (Lactobacillus casei).